The chain runs to 456 residues: Hydroxymethylglutaryl coenzyme A synthase (456 aa).

Residue alanine 34 coordinates (3S)-3-hydroxy-3-methylglutaryl-CoA. Glutamate 85 (proton donor/acceptor) is an active-site residue. The (3S)-3-hydroxy-3-methylglutaryl-CoA site is built by cysteine 119, threonine 161, serine 211, histidine 258, lysine 267, asparagine 335, and serine 369. Cysteine 119 functions as the Acyl-thioester intermediate in the catalytic mechanism. Residue histidine 258 is the Proton donor/acceptor of the active site.

Belongs to the thiolase-like superfamily. HMG-CoA synthase family.

The enzyme catalyses acetoacetyl-CoA + acetyl-CoA + H2O = (3S)-3-hydroxy-3-methylglutaryl-CoA + CoA + H(+). Functionally, HMG-CoA synthase; part of the gene cluster that mediates the biosynthesis of 1233A, a natural compound known as an inhibitor of HMG-CoA synthase in the mevalonate pathway and with antibacterial and antifungal activities. This enzyme condenses acetyl-CoA with acetoacetyl-CoA to form HMG-CoA, which is the substrate for HMG-CoA reductase. As part of the 1233A biosynthesis cluster, is involved in conferring self-resistance to 1233A. The protein is Hydroxymethylglutaryl coenzyme A synthase of Fusarium sp.